The primary structure comprises 668 residues: Probable tRNA (uracil-O(2)-)-methyltransferase (668 aa).

Residues Gln-441–Pro-460 are disordered. Residues Leu-620 to Glu-649 form a C3H1-type zinc finger.

This sequence belongs to the TRM44 family.

The protein resides in the cytoplasm. It catalyses the reaction uridine(44) in tRNA(Ser) + S-adenosyl-L-methionine = 2'-O-methyluridine(44) in tRNA(Ser) + S-adenosyl-L-homocysteine + H(+). Its function is as follows. Probable adenosyl-L-methionine (AdoMet)-dependent tRNA (uracil-O(2)-)-methyltransferase. The chain is Probable tRNA (uracil-O(2)-)-methyltransferase (trmt44) from Xenopus laevis (African clawed frog).